The primary structure comprises 351 residues: Holliday junction branch migration complex subunit RuvB (351 aa).

The interval 1 to 186 (MDEKIETRLI…FGIVQRLEFY (186 aa)) is large ATPase domain (RuvB-L). Residues isoleucine 25, arginine 26, glycine 67, lysine 70, threonine 71, threonine 72, 133–135 (EDF), arginine 176, tyrosine 186, and arginine 223 each bind ATP. Threonine 71 is a binding site for Mg(2+). The small ATPAse domain (RuvB-S) stretch occupies residues 187 to 257 (RIPDLIHIVK…IAKEALDLLN (71 aa)). Residues 260–351 (IRGLDVMDRK…ENFDLLGKVE (92 aa)) are head domain (RuvB-H). Arginine 296, arginine 315, and arginine 320 together coordinate DNA.

It belongs to the RuvB family. As to quaternary structure, homohexamer. Forms an RuvA(8)-RuvB(12)-Holliday junction (HJ) complex. HJ DNA is sandwiched between 2 RuvA tetramers; dsDNA enters through RuvA and exits via RuvB. An RuvB hexamer assembles on each DNA strand where it exits the tetramer. Each RuvB hexamer is contacted by two RuvA subunits (via domain III) on 2 adjacent RuvB subunits; this complex drives branch migration. In the full resolvosome a probable DNA-RuvA(4)-RuvB(12)-RuvC(2) complex forms which resolves the HJ.

Its subcellular location is the cytoplasm. The enzyme catalyses ATP + H2O = ADP + phosphate + H(+). In terms of biological role, the RuvA-RuvB-RuvC complex processes Holliday junction (HJ) DNA during genetic recombination and DNA repair, while the RuvA-RuvB complex plays an important role in the rescue of blocked DNA replication forks via replication fork reversal (RFR). RuvA specifically binds to HJ cruciform DNA, conferring on it an open structure. The RuvB hexamer acts as an ATP-dependent pump, pulling dsDNA into and through the RuvAB complex. RuvB forms 2 homohexamers on either side of HJ DNA bound by 1 or 2 RuvA tetramers; 4 subunits per hexamer contact DNA at a time. Coordinated motions by a converter formed by DNA-disengaged RuvB subunits stimulates ATP hydrolysis and nucleotide exchange. Immobilization of the converter enables RuvB to convert the ATP-contained energy into a lever motion, pulling 2 nucleotides of DNA out of the RuvA tetramer per ATP hydrolyzed, thus driving DNA branch migration. The RuvB motors rotate together with the DNA substrate, which together with the progressing nucleotide cycle form the mechanistic basis for DNA recombination by continuous HJ branch migration. Branch migration allows RuvC to scan DNA until it finds its consensus sequence, where it cleaves and resolves cruciform DNA. In Coxiella burnetii (strain RSA 331 / Henzerling II), this protein is Holliday junction branch migration complex subunit RuvB.